A 129-amino-acid polypeptide reads, in one-letter code: MGKEATRVRRRERKNIASGVAHVNSSFNNTTITITDAQGNTIAWSSAGTMGFKGSRKSTPYAAQVAAEDVSKKAQEHGMRTLEVEVAGPGSGRESALRALQAAGFTVTSIRDVTTIPHNGCRPRKRRRV.

This sequence belongs to the universal ribosomal protein uS11 family. As to quaternary structure, part of the 30S ribosomal subunit. Interacts with proteins S7 and S18. Binds to IF-3.

Its function is as follows. Located on the platform of the 30S subunit, it bridges several disparate RNA helices of the 16S rRNA. Forms part of the Shine-Dalgarno cleft in the 70S ribosome. The polypeptide is Small ribosomal subunit protein uS11 (Bradyrhizobium diazoefficiens (strain JCM 10833 / BCRC 13528 / IAM 13628 / NBRC 14792 / USDA 110)).